A 244-amino-acid chain; its full sequence is Gas vesicle protein F (244 aa).

This sequence belongs to the gas vesicle GvpF/GvpL family. Binds GvpA.

The protein resides in the gas vesicle. Its function is as follows. A minor component of the gas vesicle, may be involved in preventing GvpA aggregation during gas vesicle nucleation. Gas vesicles (GV) are hollow, gas filled proteinaceous nanostructures. During planktonic growth they allow positioning of the organism at a favorable depth for light or nutrient acquisition. Cluster expression in E.coli (gvpA1-gvpA2-gvpC-gvpN-gvpJ-gvpK-gvpF-gvpG-gvpV-gvpW) allows cells to float and produces irregularly shaped gas vesicles. This Nostoc sp. (strain PCC 7120 / SAG 25.82 / UTEX 2576) protein is Gas vesicle protein F.